The primary structure comprises 171 residues: Translationally-controlled tumor protein homolog (171 aa).

In terms of domain architecture, TCTP spans M1 to C171.

Belongs to the TCTP family.

The protein resides in the cytoplasm. Functionally, involved in calcium binding and microtubule stabilization. This Danio rerio (Zebrafish) protein is Translationally-controlled tumor protein homolog (tpt1).